A 201-amino-acid chain; its full sequence is Recombination protein RecR (201 aa).

Residues 59 to 74 form a C4-type zinc finger; it reads CEICGNMDTENICCIC. Positions 82-177 constitute a Toprim domain; that stretch reads SVIAVVETVA…KISRLASGIP (96 aa).

Belongs to the RecR family.

Functionally, may play a role in DNA repair. It seems to be involved in an RecBC-independent recombinational process of DNA repair. It may act with RecF and RecO. This Rickettsia felis (strain ATCC VR-1525 / URRWXCal2) (Rickettsia azadi) protein is Recombination protein RecR.